The chain runs to 198 residues: Probable GTP-binding protein EngB (198 aa).

One can recognise an EngB-type G domain in the interval 22–195 (NIPEVALAGR…LEVIGRWVGL (174 aa)). Residues 30–37 (GRSNVGKS), 57–61 (GRTRL), 75–78 (DLPG), 142–145 (TKAD), and 174–176 (FSA) each bind GTP. Mg(2+)-binding residues include serine 37 and threonine 59.

This sequence belongs to the TRAFAC class TrmE-Era-EngA-EngB-Septin-like GTPase superfamily. EngB GTPase family. Mg(2+) serves as cofactor.

In terms of biological role, necessary for normal cell division and for the maintenance of normal septation. The sequence is that of Probable GTP-binding protein EngB from Pelotomaculum thermopropionicum (strain DSM 13744 / JCM 10971 / SI).